A 224-amino-acid polypeptide reads, in one-letter code: Synaptonemal complex protein 3 (224 aa).

2 coiled-coil regions span residues Arg-63–Arg-97 and His-137–Thr-171.

As to quaternary structure, interacts with gras-1. Interacts with brc-1 and brd-1.

It localises to the chromosome. Plays a role in early meiotic events; during prophase I contributes to synaptonemal complex (SC) assembly, synapsis and chiasmata formation and stabilization of homologous chromosomes pairing. Required for restricting SC assembly to bridge paired chromosome axes. Required for the timely progression of meiotic crossover recombination. Required for the synapsis checkpoint. The sequence is that of Synaptonemal complex protein 3 from Caenorhabditis elegans.